Reading from the N-terminus, the 422-residue chain is Serine protease inhibitor A3A (422 aa).

An N-terminal signal peptide occupies residues Met1–Ala17. N-linked (GlcNAc...) asparagine glycans are attached at residues Asn218, Asn230, and Asn271. Residues His369–Val394 are RCL.

The protein belongs to the serpin family.

It is found in the secreted. In Mus musculus (Mouse), this protein is Serine protease inhibitor A3A (Serpina3a).